A 563-amino-acid polypeptide reads, in one-letter code: Efflux pump notK (563 aa).

Positions 1 to 32 (MTKDEDSGTTDGGYSTPDIAVQEKQDQPPAPE) are disordered. 14 helical membrane passes run 48–68 (IFLSTLLAALDIGIVATAIPG), 78–98 (DVGWYGGACFLLVGSSAPMWG), 108–128 (LVYLVSVVIFLVGSIVAAAAP), 138–158 (ALQGWGCSGTLGGSVLMISYV), 165–185 (AMLIGMWMSVFMFSTIIGPLL), 197–217 (WCFWINLPVGGPVIALVVLFF), 239–259 (LPGFALLLTSLVCLTVALQWG), 270–290 (VIATLVMWVVLTIAFFVVEWI), 312–332 (LYGWIANLANFQVLFYLPIYF), 345–365 (VNSLPFMAFFAAGSMLSGFLI), 374–394 (YEFASGVLATVGAALLYTLDI), 406–426 (VIFGIGIGLGNQVPMTALESF), 438–458 (VMLMCNSISGAYFVTAAQSIF), and 509–529 (VFAFSLAGAAFTVVLSLAIPF). The disordered stretch occupies residues 538 to 563 (GPSNGQEEEEGKKDGPAEKKEDEVAV). The segment covering 547–563 (EGKKDGPAEKKEDEVAV) has biased composition (basic and acidic residues).

The protein belongs to the major facilitator superfamily. TCR/Tet family.

It localises to the cell membrane. Functionally, efflux pump; part of the gene cluster that mediates the biosynthesis of notoamide, a fungal indole alkaloid that belongs to a family of natural products containing a characteristic bicyclo[2.2.2]diazaoctane core. This chain is Efflux pump notK, found in Aspergillus sp. (strain MF297-2).